The following is a 354-amino-acid chain: Histidinol-phosphate aminotransferase (354 aa).

K208 carries the N6-(pyridoxal phosphate)lysine modification.

It belongs to the class-II pyridoxal-phosphate-dependent aminotransferase family. Histidinol-phosphate aminotransferase subfamily. In terms of assembly, homodimer. Pyridoxal 5'-phosphate is required as a cofactor.

It catalyses the reaction L-histidinol phosphate + 2-oxoglutarate = 3-(imidazol-4-yl)-2-oxopropyl phosphate + L-glutamate. It functions in the pathway amino-acid biosynthesis; L-histidine biosynthesis; L-histidine from 5-phospho-alpha-D-ribose 1-diphosphate: step 7/9. The sequence is that of Histidinol-phosphate aminotransferase from Aquifex aeolicus (strain VF5).